The following is a 404-amino-acid chain: Homocysteine-responsive endoplasmic reticulum-resident ubiquitin-like domain member 2 protein (404 aa).

Residues 10–89 enclose the Ubiquitin-like domain; the sequence is VTLIIKAPNQ…HMVHLVCASR (80 aa). The segment at 86–153 is disordered; sequence CASRSPPSSP…TLSQAQTDPA (68 aa). 2 stretches are compositionally biased toward low complexity: residues 88–97 and 109–126; these read SRSPPSSPKS and SSTS…PSPS. Residues 127–153 show a composition bias toward polar residues; it reads QESLSLVTGSSEGLRQRTLSQAQTDPA. A helical transmembrane segment spans residues 301–321; sequence FIMVMGAMLLVYLHQAGWFPF.

It localises to the membrane. Functionally, could be involved in the unfolded protein response (UPR) pathway. This is Homocysteine-responsive endoplasmic reticulum-resident ubiquitin-like domain member 2 protein (Herpud2) from Mus musculus (Mouse).